We begin with the raw amino-acid sequence, 404 residues long: Lipase lipl-3 (404 aa).

Positions M1–A20 are cleaved as a signal peptide. The N-linked (GlcNAc...) asparagine glycan is linked to N65. The active-site Nucleophile is the S168. Residue N272 is glycosylated (N-linked (GlcNAc...) asparagine). Residues D344 and H376 each act as charge relay system in the active site.

Belongs to the AB hydrolase superfamily. Lipase family.

It is found in the secreted. Its subcellular location is the lysosome lumen. In terms of biological role, lipase that, together with lipl-1, plays a role in the response to nutrient deprivation by controlling lipid metabolism. Specifically, involved in the breakdown of lipids during lipophagy, a process during which lipids contained in lipid droplets that have been delivered to lysosomes by autophagy are degraded. In Caenorhabditis elegans, this protein is Lipase lipl-3.